A 347-amino-acid chain; its full sequence is NADH-quinone oxidoreductase subunit H (347 aa).

9 consecutive transmembrane segments (helical) span residues 13–33 (LIIALKSVVLLVVLLIVVAYL), 50–70 (PNVVGPWGLFQAFADLLKFVF), 82–102 (GVFLLAPFISAVLAMATWAVI), 115–135 (VGILYIFAISSLEVYGVIMGG), 161–181 (IGFVIVTVLLTVGSLNLTDIV), 198–218 (FLDWNWLCLFPMFVVFFISAL), 248–268 (FLLFFLGEYVAITLMCALMTV), 286–306 (VPGIIWFMLKLCFCFFLFAMV), and 325–345 (VFLPISLFMVVATATFLKVFG).

Belongs to the complex I subunit 1 family. NDH-1 is composed of 14 different subunits. Subunits NuoA, H, J, K, L, M, N constitute the membrane sector of the complex.

It localises to the cell inner membrane. It carries out the reaction a quinone + NADH + 5 H(+)(in) = a quinol + NAD(+) + 4 H(+)(out). In terms of biological role, NDH-1 shuttles electrons from NADH, via FMN and iron-sulfur (Fe-S) centers, to quinones in the respiratory chain. The immediate electron acceptor for the enzyme in this species is believed to be ubiquinone. Couples the redox reaction to proton translocation (for every two electrons transferred, four hydrogen ions are translocated across the cytoplasmic membrane), and thus conserves the redox energy in a proton gradient. This subunit may bind ubiquinone. This chain is NADH-quinone oxidoreductase subunit H, found in Brucella ovis (strain ATCC 25840 / 63/290 / NCTC 10512).